The following is a 348-amino-acid chain: UDP-glucose 4-epimerase (348 aa).

Residues 12–14, 33–37, 66–67, phenylalanine 88, and lysine 92 contribute to the NAD(+) site; these read GYI, DNFHN, and DI. Residue 132–134 participates in substrate binding; that stretch reads SAT. The Proton acceptor role is filled by tyrosine 157. 2 residues coordinate NAD(+): lysine 161 and tyrosine 185. Substrate contacts are provided by residues 185-187, 206-208, 224-226, arginine 239, and 300-303; these read YFN, NNL, NVF, and REGD.

The protein belongs to the NAD(P)-dependent epimerase/dehydratase family. Homodimer. Requires NAD(+) as cofactor.

The catalysed reaction is UDP-alpha-D-glucose = UDP-alpha-D-galactose. It carries out the reaction UDP-N-acetyl-alpha-D-glucosamine = UDP-N-acetyl-alpha-D-galactosamine. It participates in carbohydrate metabolism; galactose metabolism. In terms of biological role, catalyzes two distinct but analogous reactions: the reversible epimerization of UDP-glucose to UDP-galactose and the reversible epimerization of UDP-N-acetylglucosamine to UDP-N-acetylgalactosamine. The reaction with UDP-Gal plays a critical role in the Leloir pathway of galactose catabolism in which galactose is converted to the glycolytic intermediate glucose 6-phosphate. It contributes to the catabolism of dietary galactose and enables the endogenous biosynthesis of both UDP-Gal and UDP-GalNAc when exogenous sources are limited. Both UDP-sugar interconversions are important in the synthesis of glycoproteins and glycolipids. This is UDP-glucose 4-epimerase from Homo sapiens (Human).